The sequence spans 296 residues: tRNA dimethylallyltransferase (296 aa).

2-9 (GPTASGKT) contacts ATP. 4–9 (TASGKT) lines the substrate pocket. Interaction with substrate tRNA stretches follow at residues 27-30 (DSAL), 151-155 (QRLSR), and 232-237 (RCVGYR).

This sequence belongs to the IPP transferase family. Monomer. It depends on Mg(2+) as a cofactor.

It carries out the reaction adenosine(37) in tRNA + dimethylallyl diphosphate = N(6)-dimethylallyladenosine(37) in tRNA + diphosphate. Its function is as follows. Catalyzes the transfer of a dimethylallyl group onto the adenine at position 37 in tRNAs that read codons beginning with uridine, leading to the formation of N6-(dimethylallyl)adenosine (i(6)A). The polypeptide is tRNA dimethylallyltransferase (Shewanella sp. (strain MR-4)).